A 648-amino-acid polypeptide reads, in one-letter code: Cysteine-rich receptor-like protein kinase 38 (648 aa).

Positions 1–25 (MKNSAAIFLTSSLILLLQTLHGVKA) are cleaved as a signal peptide. Gnk2-homologous domains follow at residues 26–127 (GFIC…DQST) and 140–247 (PSPV…FYPF). Residues 26 to 278 (GFICVGSSFP…EAISITRLKG (253 aa)) are Extracellular-facing. Asparagine 37, asparagine 63, asparagine 151, asparagine 174, and asparagine 253 each carry an N-linked (GlcNAc...) asparagine glycan. Residues 279 to 299 (GIIAIFVVPIVINLLVFIGLI) traverse the membrane as a helical segment. Over 300-648 (RAYTRIRKSY…ELSITELSPR (349 aa)) the chain is Cytoplasmic. In terms of domain architecture, Protein kinase spans 339–611 (FSFENKIGQG…VIQWLGSETI (273 aa)). ATP contacts are provided by residues 345–353 (IGQGGFGSV) and lysine 367. Phosphotyrosine is present on tyrosine 412. Aspartate 464 serves as the catalytic Proton acceptor. At serine 468 the chain carries Phosphoserine. Threonine 504 is modified (phosphothreonine). Tyrosine 512 carries the phosphotyrosine modification.

The protein belongs to the protein kinase superfamily. Ser/Thr protein kinase family. CRK subfamily.

It is found in the membrane. It carries out the reaction L-seryl-[protein] + ATP = O-phospho-L-seryl-[protein] + ADP + H(+). The catalysed reaction is L-threonyl-[protein] + ATP = O-phospho-L-threonyl-[protein] + ADP + H(+). This is Cysteine-rich receptor-like protein kinase 38 (CRK38) from Arabidopsis thaliana (Mouse-ear cress).